The sequence spans 191 residues: Putative resolvase L103 (191 aa).

The H-T-H motif DNA-binding region spans 11 to 30 (LEVLKVHYQTLYRMEEKGLI). In terms of domain architecture, Resolvase/invertase-type recombinase catalytic spans 59–191 (KGICYCRVSS…KKSGKLKAKK (133 aa)). The stretch at 65–91 (RVSSKKQIKDLNRQVEYMEKNYPEYEI) forms a coiled coil. Residue Ser-67 is the O-(5'-phospho-DNA)-serine intermediate of the active site.

Belongs to the site-specific recombinase resolvase family.

Resolvase catalyzes the resolution (a site-specific recombination) of the cointegrated replicon to yield the final transposition products. This is Putative resolvase L103 from Acanthamoeba polyphaga (Amoeba).